A 266-amino-acid chain; its full sequence is Esterase AGAP003155 (266 aa).

Active-site charge relay system residues include Ser-114, Asp-172, and His-199. Residues Ala-231–Asp-266 are disordered.

It belongs to the LovG family.

In Anopheles gambiae (African malaria mosquito), this protein is Esterase AGAP003155.